A 185-amino-acid chain; its full sequence is Small ribosomal subunit protein uS5 (185 aa).

One can recognise an S5 DRBM domain in the interval 29-92; sequence LEEKVVKINR…EKAKKQLVRI (64 aa).

It belongs to the universal ribosomal protein uS5 family. In terms of assembly, part of the 30S ribosomal subunit. Contacts proteins S4 and S8.

With S4 and S12 plays an important role in translational accuracy. In terms of biological role, located at the back of the 30S subunit body where it stabilizes the conformation of the head with respect to the body. The chain is Small ribosomal subunit protein uS5 from Aster yellows witches'-broom phytoplasma (strain AYWB).